A 1343-amino-acid chain; its full sequence is Xanthine dehydrogenase (1343 aa).

The 2Fe-2S ferredoxin-type domain occupies 8–95 (SELVFFVNGK…GCAVTTVEGI (88 aa)). Residues Cys-47, Cys-52, Cys-55, Cys-77, Cys-117, Cys-120, Cys-152, and Cys-154 each contribute to the [2Fe-2S] cluster site. One can recognise an FAD-binding PCMH-type domain in the interval 235–424 (FSSERVTWYR…LGIHFQKTTP (190 aa)). Residues 263–270 (LVVGNTEV), Phe-343, 353–357 (CLGGN), Asp-366, Leu-414, and Lys-432 each bind FAD. The Mo-molybdopterin site is built by Gln-780 and Phe-811. The substrate site is built by Glu-815 and Arg-893. Arg-925 serves as a coordination point for Mo-molybdopterin. Residue Phe-927 coordinates substrate. Ala-1092 lines the Mo-molybdopterin pocket. The Proton acceptor role is filled by Glu-1275.

The protein belongs to the xanthine dehydrogenase family. In terms of assembly, homodimer. FAD serves as cofactor. Requires Mo-molybdopterin as cofactor. It depends on [2Fe-2S] cluster as a cofactor.

Its subcellular location is the peroxisome. It carries out the reaction xanthine + NAD(+) + H2O = urate + NADH + H(+). The enzyme catalyses hypoxanthine + NAD(+) + H2O = xanthine + NADH + H(+). Its function is as follows. Key enzyme in purine degradation. Catalyzes the oxidation of hypoxanthine to xanthine. Catalyzes the oxidation of xanthine to uric acid. The protein is Xanthine dehydrogenase (ry) of Drosophila pseudoobscura pseudoobscura (Fruit fly).